Consider the following 130-residue polypeptide: Protein LLP homolog (130 aa).

Residues 1 to 21 (MAKSLRSKWKRKMRAEKRKKN) show a composition bias toward basic residues. Disordered regions lie at residues 1–23 (MAKS…KNAP) and 57–76 (QEKM…EKDD). A coiled-coil region spans residues 10-78 (KRKMRAEKRK…GADEEKDDMK (69 aa)). Residue lysine 78 forms a Glycyl lysine isopeptide (Lys-Gly) (interchain with G-Cter in SUMO2) linkage. The span at 104–124 (RQRKRLKAKREKKRGKSRAKA) shows a compositional bias: basic residues. Residues 104–130 (RQRKRLKAKREKKRGKSRAKAAKGLAW) form a disordered region.

This sequence belongs to the learning-associated protein family. As to quaternary structure, interacts with CTCF, MYO1C and with the transcriptional machinery, including RNA polymerase II and TBP. In terms of tissue distribution, widely expressed, with high levels in testis and spleen and low levels in heart. In the brain, expressed in the cortex and hippocampus, and at very low levels in the cerebellum.

The protein localises to the nucleus. Its subcellular location is the nucleolus. It localises to the chromosome. In hippocampal neurons, regulates dendritic and spine growth and synaptic transmission. The chain is Protein LLP homolog (Llph) from Mus musculus (Mouse).